The following is a 171-amino-acid chain: Protein GrpE (171 aa).

Residues 1–20 (MNEEKEESPSTEAEGAGAEV) are disordered.

This sequence belongs to the GrpE family. In terms of assembly, homodimer.

Its subcellular location is the cytoplasm. Its function is as follows. Participates actively in the response to hyperosmotic and heat shock by preventing the aggregation of stress-denatured proteins, in association with DnaK and GrpE. It is the nucleotide exchange factor for DnaK and may function as a thermosensor. Unfolded proteins bind initially to DnaJ; upon interaction with the DnaJ-bound protein, DnaK hydrolyzes its bound ATP, resulting in the formation of a stable complex. GrpE releases ADP from DnaK; ATP binding to DnaK triggers the release of the substrate protein, thus completing the reaction cycle. Several rounds of ATP-dependent interactions between DnaJ, DnaK and GrpE are required for fully efficient folding. The polypeptide is Protein GrpE (Acidithiobacillus ferrooxidans (strain ATCC 23270 / DSM 14882 / CIP 104768 / NCIMB 8455) (Ferrobacillus ferrooxidans (strain ATCC 23270))).